The primary structure comprises 264 residues: Regulator of cytoskeleton and endocytosis RVS161 (264 aa).

One can recognise a BAR domain in the interval 15 to 239; that stretch reads ASVIVKDVDK…LDPASRDEYA (225 aa).

The protein localises to the cytoplasm. Its subcellular location is the cytoskeleton. Component of a cytoskeletal structure that is required for the formation of endocytic vesicles at the plasma membrane level. Plays an important role in virulence. The protein is Regulator of cytoskeleton and endocytosis RVS161 (RVS161) of Candida albicans (strain SC5314 / ATCC MYA-2876) (Yeast).